Here is a 606-residue protein sequence, read N- to C-terminus: MRTLTESRRRQSGSSGCKKDSESDDDENTICSRAAIKRSVVYYLKNSTLHGLKYIAEESITIPERIFFGLAFVLVVILSVFFISNVYVKWSASPIIISTSAKQKLTSNMPFPAITICNLNQALLSKVDRIGRTSTNFSLLMGLCDQGGDTTISYIGTWKYFKAILVDVAQPCEKMLLYCSFGSREEDCSWLFTSILTDDGLCCNFNALHPSYLIRNYSDDVRLETAHPNTRYELIDWTPEKGYARNLPEFYFPRTSGGTGIRMGLTVVLNASIAEYYCTKSMSVGFKVLVHNPAELPKVSNYGFVVTAGREARIPIEPVYEDALPTIRSIKKSVRRCLFSDENDLAYYRTYSRKNCELECEAKLLLRECSCVLYYLPRIDPLARVCGPNDNQCTDRVQTEIESSLTNLSCENCWPGCFELTYRATLSTASIVSDPRFQAGENLPEYIFHGPYSNASEISILHFYYMTNIFRSTTKSEMFGFTEFLSNTGGLLGLFMGFSIFSVIEIFFYITVRPYCASRTLRQRHKRRLEQLSWLTPIRMPVRRALRRNRGGLLRNPPPPAYSDLQKFRGKLDKPETCKRKLWRTLQVRPVVDRADEELPTYPYLD.

The segment at 1-26 (MRTLTESRRRQSGSSGCKKDSESDDD) is disordered. The next 2 membrane-spanning stretches (helical) occupy residues 66-86 (IFFGLAFVLVVILSVFFISNV) and 490-510 (GLLGLFMGFSIFSVIEIFFYI).

Belongs to the amiloride-sensitive sodium channel (TC 1.A.6) family. As to expression, expressed in water-sensing neurons in taste bristles on the proboscis but not in carbonation-sensing taste peg neurons (at protein level). Expressed in the tracheal system.

It is found in the cell membrane. Functionally, osmosensitive ion channel that mediates the cellular and behavioral response to water. Plays an essential role in gustatory water reception. Part of a complex that plays a role in tracheal liquid clearance. Probable role in sodium transport. The protein is Pickpocket protein 28 (ppk28) of Drosophila melanogaster (Fruit fly).